Consider the following 243-residue polypeptide: 1-(5-phosphoribosyl)-5-[(5-phosphoribosylamino)methylideneamino] imidazole-4-carboxamide isomerase (243 aa).

The active-site Proton acceptor is the aspartate 8. Residue aspartate 129 is the Proton donor of the active site.

This sequence belongs to the HisA/HisF family.

It localises to the cytoplasm. The catalysed reaction is 1-(5-phospho-beta-D-ribosyl)-5-[(5-phospho-beta-D-ribosylamino)methylideneamino]imidazole-4-carboxamide = 5-[(5-phospho-1-deoxy-D-ribulos-1-ylimino)methylamino]-1-(5-phospho-beta-D-ribosyl)imidazole-4-carboxamide. It participates in amino-acid biosynthesis; L-histidine biosynthesis; L-histidine from 5-phospho-alpha-D-ribose 1-diphosphate: step 4/9. The protein is 1-(5-phosphoribosyl)-5-[(5-phosphoribosylamino)methylideneamino] imidazole-4-carboxamide isomerase of Moorella thermoacetica (strain ATCC 39073 / JCM 9320).